A 263-amino-acid chain; its full sequence is Small ribosomal subunit protein eS4, Y isoform 2 (263 aa).

One can recognise an S4 RNA-binding domain in the interval L42–N104.

Belongs to the eukaryotic ribosomal protein eS4 family.

The protein is Small ribosomal subunit protein eS4, Y isoform 2 (RPS4Y2) of Homo sapiens (Human).